The following is a 99-amino-acid chain: Small ribosomal subunit protein bS20 (99 aa).

This sequence belongs to the bacterial ribosomal protein bS20 family.

Its function is as follows. Binds directly to 16S ribosomal RNA. The sequence is that of Small ribosomal subunit protein bS20 from Caldicellulosiruptor bescii (strain ATCC BAA-1888 / DSM 6725 / KCTC 15123 / Z-1320) (Anaerocellum thermophilum).